A 215-amino-acid polypeptide reads, in one-letter code: Histidine biosynthesis bifunctional protein HisIE (215 aa).

Residues 1 to 114 (MLKKHDLLNL…FISNKYNINF (114 aa)) form a phosphoribosyl-AMP cyclohydrolase region. Residues 115-215 (LFKLEEIIEE…LNTNSEKLLK (101 aa)) form a phosphoribosyl-ATP pyrophosphohydrolase region.

In the N-terminal section; belongs to the PRA-CH family. The protein in the C-terminal section; belongs to the PRA-PH family.

It localises to the cytoplasm. The enzyme catalyses 1-(5-phospho-beta-D-ribosyl)-ATP + H2O = 1-(5-phospho-beta-D-ribosyl)-5'-AMP + diphosphate + H(+). It carries out the reaction 1-(5-phospho-beta-D-ribosyl)-5'-AMP + H2O = 1-(5-phospho-beta-D-ribosyl)-5-[(5-phospho-beta-D-ribosylamino)methylideneamino]imidazole-4-carboxamide. It participates in amino-acid biosynthesis; L-histidine biosynthesis; L-histidine from 5-phospho-alpha-D-ribose 1-diphosphate: step 2/9. It functions in the pathway amino-acid biosynthesis; L-histidine biosynthesis; L-histidine from 5-phospho-alpha-D-ribose 1-diphosphate: step 3/9. In Buchnera aphidicola subsp. Acyrthosiphon pisum (strain APS) (Acyrthosiphon pisum symbiotic bacterium), this protein is Histidine biosynthesis bifunctional protein HisIE (hisI).